A 437-amino-acid polypeptide reads, in one-letter code: Ribulose bisphosphate carboxylase/oxygenase activase, chloroplastic (437 aa).

Over residues 1-10 the composition is skewed to polar residues; the sequence is MATAVSTIGS. Residues 1-26 are disordered; sequence MATAVSTIGSVNRAPPNLNGSSSSAS. 165–172 contacts ATP; the sequence is GGKGQGKS.

Belongs to the RuBisCO activase family.

Its subcellular location is the plastid. The protein resides in the chloroplast stroma. Activation of RuBisCO (ribulose-1,5-bisphosphate carboxylase/oxygenase; EC 4.1.1.39) involves the ATP-dependent carboxylation of the epsilon-amino group of lysine leading to a carbamate structure. This Malus domestica (Apple) protein is Ribulose bisphosphate carboxylase/oxygenase activase, chloroplastic (RCA).